Reading from the N-terminus, the 280-residue chain is Putative protein-tyrosine sulfotransferase (280 aa).

Arginine 16–threonine 20 is a 3'-phosphoadenylyl sulfate binding site. A disulfide bond links cysteine 34 and cysteine 89. Glutamate 37 (proton donor/acceptor) is an active-site residue. An N-linked (GlcNAc...) asparagine glycan is attached at asparagine 57. 3'-phosphoadenylyl sulfate contacts are provided by arginine 116, serine 124, and arginine 128. Residue asparagine 136 is glycosylated (N-linked (GlcNAc...) asparagine). Residues cysteine 158 and cysteine 165 are joined by a disulfide bond. Residues tyrosine 170 and serine 215–asparagine 224 each bind 3'-phosphoadenylyl sulfate.

Belongs to the protein sulfotransferase family.

It catalyses the reaction L-tyrosyl-[protein] + 3'-phosphoadenylyl sulfate = O-sulfo-L-tyrosine-[protein] + adenosine 3',5'-bisphosphate + H(+). Functionally, catalyzes the O-sulfation of tyrosine residues within acidic motifs of polypeptides, using 3'-phosphoadenylyl sulfate (PAPS) as cosubstrate. The protein is Putative protein-tyrosine sulfotransferase of Caenorhabditis briggsae.